Here is a 297-residue protein sequence, read N- to C-terminus: Tyrosine recombinase XerD (297 aa).

A Core-binding (CB) domain is found at 2-86 (KKLDPIIEQF…CLRKFFRFLC (85 aa)). The 185-residue stretch at 107-291 (QLPKSLSEEQ…AKTRLKSIHK (185 aa)) folds into the Tyr recombinase domain. Active-site residues include R147, K171, H243, R246, and H269. Y278 functions as the O-(3'-phospho-DNA)-tyrosine intermediate in the catalytic mechanism.

The protein belongs to the 'phage' integrase family. XerD subfamily. In terms of assembly, forms a cyclic heterotetrameric complex composed of two molecules of XerC and two molecules of XerD.

The protein resides in the cytoplasm. Functionally, site-specific tyrosine recombinase, which acts by catalyzing the cutting and rejoining of the recombining DNA molecules. The XerC-XerD complex is essential to convert dimers of the bacterial chromosome into monomers to permit their segregation at cell division. It also contributes to the segregational stability of plasmids. The protein is Tyrosine recombinase XerD of Haemophilus ducreyi (strain 35000HP / ATCC 700724).